The chain runs to 225 residues: Prepilin leader peptidase/N-methyltransferase (225 aa).

Residues 1–2 are Periplasmic-facing; that stretch reads MT. A helical transmembrane segment spans residues 3–23; that stretch reads MLLPLFILVGFIADYFVNAIA. Residues 24–67 are Cytoplasmic-facing; sequence YHLSPLEDKTALTFRQVLVHFRQKKYAWHDTVPLILCVAAAIAC. A helical membrane pass occupies residues 68 to 88; the sequence is ALAPFTPIVTGALFLYFCFVL. Residues 89–103 lie on the Periplasmic side of the membrane; that stretch reads TLSVIDFRTQLLPDK. Residues 104–124 traverse the membrane as a helical segment; that stretch reads LTLPLLWLGLVFNAQYGLIDL. At 125–127 the chain is on the cytoplasmic side; sequence HDA. The helical transmembrane segment at 128-148 threads the bilayer; sequence VYGAVAGYGVLWCVYWGVWLV. At 149-174 the chain is on the periplasmic side; that stretch reads CHKEGLGYGDFKLLAAAGAWCGWQTL. A helical transmembrane segment spans residues 175 to 195; it reads PMILLIASLGGIGYAIVSQLL. Residues 196–202 are Cytoplasmic-facing; that stretch reads QRRTITT. A helical membrane pass occupies residues 203-223; it reads IAFGPWLALGSMINLGYLAWI. The Periplasmic segment spans residues 224 to 225; that stretch reads SY.

This sequence belongs to the peptidase A24 family.

The protein localises to the cell inner membrane. It carries out the reaction Typically cleaves a -Gly-|-Phe- bond to release an N-terminal, basic peptide of 5-8 residues from type IV prepilin, and then N-methylates the new N-terminal amino group, the methyl donor being S-adenosyl-L-methionine.. In terms of biological role, plays a role in type II pseudopili formation by proteolytically removing the leader sequence from substrate proteins and subsequently monomethylating the alpha-amino group of the newly exposed N-terminal phenylalanine. Substrates include proteins required for biogenesis of the type II general secretory apparatus. The polypeptide is Prepilin leader peptidase/N-methyltransferase (gspO) (Escherichia coli (strain K12)).